The primary structure comprises 270 residues: NADPH-dependent 7-cyano-7-deazaguanine reductase (270 aa).

Residue 79–81 (IES) coordinates substrate. NADPH is bound at residue 81-82 (SK). Cys-177 functions as the Thioimide intermediate in the catalytic mechanism. Asp-184 acts as the Proton donor in catalysis. 216 to 217 (HE) contributes to the substrate binding site. Position 245–246 (245–246 (RG)) interacts with NADPH.

Belongs to the GTP cyclohydrolase I family. QueF type 2 subfamily. Homodimer.

It localises to the cytoplasm. It catalyses the reaction 7-aminomethyl-7-carbaguanine + 2 NADP(+) = 7-cyano-7-deazaguanine + 2 NADPH + 3 H(+). It participates in tRNA modification; tRNA-queuosine biosynthesis. In terms of biological role, catalyzes the NADPH-dependent reduction of 7-cyano-7-deazaguanine (preQ0) to 7-aminomethyl-7-deazaguanine (preQ1). The polypeptide is NADPH-dependent 7-cyano-7-deazaguanine reductase (Acinetobacter baumannii (strain SDF)).